The following is a 159-amino-acid chain: MTRSEKVEIIAKLEEGFKASEAIVVCNYRGLSTKKLEELRNNARENNVKVQIVKNTLANIALNNSGKTGLVLKDTNIYLWGEDQLGVSKVAAKFEENNDKFEIKTAHIEGEVADVAKVKALAKMPSRNELLAMLLQVWNAPITNFTIGLNALKNKKESE.

It belongs to the universal ribosomal protein uL10 family. In terms of assembly, part of the ribosomal stalk of the 50S ribosomal subunit. The N-terminus interacts with L11 and the large rRNA to form the base of the stalk. The C-terminus forms an elongated spine to which L12 dimers bind in a sequential fashion forming a multimeric L10(L12)X complex.

Its function is as follows. Forms part of the ribosomal stalk, playing a central role in the interaction of the ribosome with GTP-bound translation factors. This chain is Large ribosomal subunit protein uL10, found in Campylobacter jejuni (strain RM1221).